We begin with the raw amino-acid sequence, 750 residues long: GTP pyrophosphokinase rsh (750 aa).

The region spanning 45-144 (YFSHPLEVAA…VKLADRLHNM (100 aa)) is the HD domain. The TGS domain occupies 390 to 451 (DQVFCFTPKG…KNGDEVDIIR (62 aa)). Residues 587–613 (AAKVDPAATTPKPGKRALPIRGTNPDL) form a disordered region. An ACT domain is found at 676–750 (RISVSAINSP…SVSSAKRVNG (75 aa)).

This sequence belongs to the RelA/SpoT family.

It carries out the reaction GTP + ATP = guanosine 3'-diphosphate 5'-triphosphate + AMP. Functions as a (p)ppGpp synthase. In eubacteria ppGpp (guanosine 3'-diphosphate 5'-diphosphate) is a mediator of the stringent response that coordinates a variety of cellular activities in response to changes in nutritional abundance. Plays a role in adaptation of Brucella to its intracellular host environment. The chain is GTP pyrophosphokinase rsh (rsh) from Brucella abortus (strain 2308).